We begin with the raw amino-acid sequence, 347 residues long: NADH-quinone oxidoreductase subunit H (347 aa).

Transmembrane regions (helical) follow at residues Ile-25–Met-45, Phe-95–Ile-115, Ile-128–Gly-148, Ile-168–Phe-188, Gly-200–Val-220, Phe-251–Phe-271, Phe-284–Leu-304, and Val-324–Ser-344.

This sequence belongs to the complex I subunit 1 family. As to quaternary structure, NDH-1 is composed of 14 different subunits. Subunits NuoA, H, J, K, L, M, N constitute the membrane sector of the complex.

It localises to the cell inner membrane. It catalyses the reaction a quinone + NADH + 5 H(+)(in) = a quinol + NAD(+) + 4 H(+)(out). In terms of biological role, NDH-1 shuttles electrons from NADH, via FMN and iron-sulfur (Fe-S) centers, to quinones in the respiratory chain. The immediate electron acceptor for the enzyme in this species is believed to be ubiquinone. Couples the redox reaction to proton translocation (for every two electrons transferred, four hydrogen ions are translocated across the cytoplasmic membrane), and thus conserves the redox energy in a proton gradient. This subunit may bind ubiquinone. This is NADH-quinone oxidoreductase subunit H from Psychrobacter arcticus (strain DSM 17307 / VKM B-2377 / 273-4).